We begin with the raw amino-acid sequence, 560 residues long: uncharacterized protein (560 aa).

One can recognise an ABC transmembrane type-1 domain in the interval 1 to 281 (MLWNWVALVG…LGSFFHVAMN (281 aa)). Helical transmembrane passes span 2 to 22 (LWNWVALVGGIISAVVFSYIL), 32 to 52 (LLSAVILGIVLIAALALRAFA), 108 to 128 (IYFGRYLPQLFYSLLAPLTLF), 138 to 160 (TAIILLICVPLIPMSIIAVNKIA), 168 to 188 (WSIYVGLGSSFLDNLQGLITL), 223 to 243 (VSLMDLLAYGGAAIGILTALL), and 249 to 269 (QLSVLGVILFILLSSEFFIPL). The 234-residue stretch at 314-547 (VEIKDLHFSY…QGAYAEMFQQ (234 aa)) folds into the ABC transporter domain. Residue 347 to 354 (GKSGCGKS) participates in ATP binding.

This sequence belongs to the ABC transporter superfamily.

It is found in the cell inner membrane. This is an uncharacterized protein from Haemophilus influenzae (strain ATCC 51907 / DSM 11121 / KW20 / Rd).